A 175-amino-acid polypeptide reads, in one-letter code: uncharacterized protein (175 aa).

A signal peptide spans 1 to 23 (MILVLLLILIAFLYIYFPSSLNQ).

This is an uncharacterized protein from Invertebrate iridescent virus 6 (IIV-6).